Reading from the N-terminus, the 262-residue chain is Cytochrome c oxidase subunit 3 (262 aa).

The next 6 membrane-spanning stretches (helical) occupy residues 39-59, 83-103, 120-140, 163-183, 201-221, and 240-260; these read YTMTLFILGNIITILTMYQWW, GMILFIVSEIFFFISFFWAFF, VGIIAFNPFQIPLLNTAILLA, GLFFTIVLGIYFSILQAYEYI, ATGFHGLHVLIGTTFLLICFL, and AWYWHFVDVVWLFLYISIYWW.

The protein belongs to the cytochrome c oxidase subunit 3 family. Component of the cytochrome c oxidase (complex IV, CIV), a multisubunit enzyme composed of a catalytic core of 3 subunits and several supernumerary subunits. The complex exists as a monomer or a dimer and forms supercomplexes (SCs) in the inner mitochondrial membrane with ubiquinol-cytochrome c oxidoreductase (cytochrome b-c1 complex, complex III, CIII).

The protein resides in the mitochondrion inner membrane. The enzyme catalyses 4 Fe(II)-[cytochrome c] + O2 + 8 H(+)(in) = 4 Fe(III)-[cytochrome c] + 2 H2O + 4 H(+)(out). Component of the cytochrome c oxidase, the last enzyme in the mitochondrial electron transport chain which drives oxidative phosphorylation. The respiratory chain contains 3 multisubunit complexes succinate dehydrogenase (complex II, CII), ubiquinol-cytochrome c oxidoreductase (cytochrome b-c1 complex, complex III, CIII) and cytochrome c oxidase (complex IV, CIV), that cooperate to transfer electrons derived from NADH and succinate to molecular oxygen, creating an electrochemical gradient over the inner membrane that drives transmembrane transport and the ATP synthase. Cytochrome c oxidase is the component of the respiratory chain that catalyzes the reduction of oxygen to water. Electrons originating from reduced cytochrome c in the intermembrane space (IMS) are transferred via the dinuclear copper A center (CU(A)) of subunit 2 and heme A of subunit 1 to the active site in subunit 1, a binuclear center (BNC) formed by heme A3 and copper B (CU(B)). The BNC reduces molecular oxygen to 2 water molecules using 4 electrons from cytochrome c in the IMS and 4 protons from the mitochondrial matrix. The sequence is that of Cytochrome c oxidase subunit 3 (COIII) from Anopheles quadrimaculatus (Common malaria mosquito).